Here is a 369-residue protein sequence, read N- to C-terminus: Anhydro-N-acetylmuramic acid kinase (369 aa).

Position 12–19 (12–19 (GTSMDGVD)) interacts with ATP.

Belongs to the anhydro-N-acetylmuramic acid kinase family.

The enzyme catalyses 1,6-anhydro-N-acetyl-beta-muramate + ATP + H2O = N-acetyl-D-muramate 6-phosphate + ADP + H(+). The protein operates within amino-sugar metabolism; 1,6-anhydro-N-acetylmuramate degradation. Its pathway is cell wall biogenesis; peptidoglycan recycling. Its function is as follows. Catalyzes the specific phosphorylation of 1,6-anhydro-N-acetylmuramic acid (anhMurNAc) with the simultaneous cleavage of the 1,6-anhydro ring, generating MurNAc-6-P. Is required for the utilization of anhMurNAc either imported from the medium or derived from its own cell wall murein, and thus plays a role in cell wall recycling. The sequence is that of Anhydro-N-acetylmuramic acid kinase from Shewanella sp. (strain MR-7).